Consider the following 350-residue polypeptide: Nicotinate-nucleotide--dimethylbenzimidazole phosphoribosyltransferase (350 aa).

The active-site Proton acceptor is the E318.

Belongs to the CobT family.

It catalyses the reaction 5,6-dimethylbenzimidazole + nicotinate beta-D-ribonucleotide = alpha-ribazole 5'-phosphate + nicotinate + H(+). The protein operates within nucleoside biosynthesis; alpha-ribazole biosynthesis; alpha-ribazole from 5,6-dimethylbenzimidazole: step 1/2. Functionally, catalyzes the synthesis of alpha-ribazole-5'-phosphate from nicotinate mononucleotide (NAMN) and 5,6-dimethylbenzimidazole (DMB). This Citrifermentans bemidjiense (strain ATCC BAA-1014 / DSM 16622 / JCM 12645 / Bem) (Geobacter bemidjiensis) protein is Nicotinate-nucleotide--dimethylbenzimidazole phosphoribosyltransferase.